The primary structure comprises 503 residues: Arabinose import ATP-binding protein AraG 1 (503 aa).

ABC transporter domains follow at residues 5-240 and 251-497; these read LRFD…MVGR and RTLG…LPQT. 37-44 serves as a coordination point for ATP; that stretch reads GENGAGKS.

Belongs to the ABC transporter superfamily. Arabinose importer (TC 3.A.1.2.2) family. In terms of assembly, the complex is composed of two ATP-binding proteins (AraG), two transmembrane proteins (AraH) and a solute-binding protein (AraF).

The protein localises to the cell inner membrane. It carries out the reaction L-arabinose(out) + ATP + H2O = L-arabinose(in) + ADP + phosphate + H(+). Part of the ABC transporter complex AraFGH involved in arabinose import. Responsible for energy coupling to the transport system. In Burkholderia cenocepacia (strain HI2424), this protein is Arabinose import ATP-binding protein AraG 1.